A 388-amino-acid polypeptide reads, in one-letter code: NADPH-dependent butanol dehydrogenase (388 aa).

Belongs to the iron-containing alcohol dehydrogenase family.

This enzyme has activity using butanol and ethanol as substrates. The chain is NADPH-dependent butanol dehydrogenase (adh1) from Clostridium saccharobutylicum.